A 361-amino-acid polypeptide reads, in one-letter code: Peptide chain release factor 1 (361 aa).

Residue Gln237 is modified to N5-methylglutamine. Positions 287–297 (KQQKEQSDTRK) are enriched in basic and acidic residues. Residues 287–313 (KQQKEQSDTRKSLVGSGDRSERIRTYN) form a disordered region.

Belongs to the prokaryotic/mitochondrial release factor family. Post-translationally, methylated by PrmC. Methylation increases the termination efficiency of RF1.

Its subcellular location is the cytoplasm. Functionally, peptide chain release factor 1 directs the termination of translation in response to the peptide chain termination codons UAG and UAA. The polypeptide is Peptide chain release factor 1 (Francisella tularensis subsp. holarctica (strain FTNF002-00 / FTA)).